A 620-amino-acid polypeptide reads, in one-letter code: MYGRDPWGGPLEINAADSMTDDDRSRNLQDLDRATPSRPLDETQQSWLLGPKVLKKKKYVDLGCILVSRKIFLWTLGTIVVTALLSGFITLIVKTLPHHHHKEPPPDNYTIALRTALKFFNAQQSGKLPKNIYNVSWRHDSCLQDGKGDPGQCYKDLVGGYYDAGDSIKFNFPMSYAMTMLSWSVIEYSAKYQAAGELEHVKELIKWGTDYFLKTFNSSADNIYVMVEQVGSGVSGRGSELHNDHYCWMRPEDIHYKRTVSQCYSSCSDLAAEMAAALASASIVFKDNRLYSKNLVHGAKTLYRFATTSRNRYSQNGKESSKFYNSSMFEDELLWGGAWLYYATGNVTYLERVTSHHMAEKAGAFGNSPYYGVFSWDNKLPGAQLLLTRMRLFLSPGYPYEDMLSEFHNQTGRVMCSYLPYYKKFNRTNGGLIQLNHGAPQPLQYVANAAFLAALFSDYLEAADTPGWYCGPNFYTTEFLRNFSRSQIDYILGKNPRKMSYVVGYGQRYPKQVHHRGASIPKNMKETCTGGFKWKKSKKNNPNAINGAMVAGPDKHDGFHDIRTNYNYTEPTLAGNAGLVAALVALSGEKAVGGIDKNTMFSAVPPLVMATPPPPAPWTP.

The segment at 1-39 (MYGRDPWGGPLEINAADSMTDDDRSRNLQDLDRATPSRP) is disordered. At 1–70 (MYGRDPWGGP…DLGCILVSRK (70 aa)) the chain is on the cytoplasmic side. Positions 21–39 (DDDRSRNLQDLDRATPSRP) are enriched in basic and acidic residues. A helical; Signal-anchor for type II membrane protein transmembrane segment spans residues 71 to 91 (IFLWTLGTIVVTALLSGFITL). At 92–620 (IVKTLPHHHH…TPPPPAPWTP (529 aa)) the chain is on the extracellular side. N-linked (GlcNAc...) asparagine glycans are attached at residues N108 and N134. D166 acts as the Nucleophile in catalysis. N217, N325, N346, N409, N426, and N482 each carry an N-linked (GlcNAc...) asparagine glycan. Catalysis depends on residues H514 and D561. An N-linked (GlcNAc...) asparagine glycan is attached at N567. E570 is an active-site residue.

This sequence belongs to the glycosyl hydrolase 9 (cellulase E) family. As to expression, expressed in conductive tissues of young roots, cotyledons, rosette leaves, cauline leaves and sepals. Expressed in the leaf trichome support cells.

The protein localises to the cell membrane. It carries out the reaction Endohydrolysis of (1-&gt;4)-beta-D-glucosidic linkages in cellulose, lichenin and cereal beta-D-glucans.. This Arabidopsis thaliana (Mouse-ear cress) protein is Endoglucanase 21 (KOR3).